Consider the following 429-residue polypeptide: Serine hydroxymethyltransferase (429 aa).

Residues Leu126 and 130 to 132 each bind (6S)-5,6,7,8-tetrahydrofolate; that span reads GHL. Lys235 carries the post-translational modification N6-(pyridoxal phosphate)lysine. A (6S)-5,6,7,8-tetrahydrofolate-binding site is contributed by 359 to 361; it reads SPF.

The protein belongs to the SHMT family. In terms of assembly, homodimer. The cofactor is pyridoxal 5'-phosphate.

The protein resides in the cytoplasm. It carries out the reaction (6R)-5,10-methylene-5,6,7,8-tetrahydrofolate + glycine + H2O = (6S)-5,6,7,8-tetrahydrofolate + L-serine. It participates in one-carbon metabolism; tetrahydrofolate interconversion. It functions in the pathway amino-acid biosynthesis; glycine biosynthesis; glycine from L-serine: step 1/1. In terms of biological role, catalyzes the reversible interconversion of serine and glycine with tetrahydrofolate (THF) serving as the one-carbon carrier. This reaction serves as the major source of one-carbon groups required for the biosynthesis of purines, thymidylate, methionine, and other important biomolecules. Also exhibits THF-independent aldolase activity toward beta-hydroxyamino acids, producing glycine and aldehydes, via a retro-aldol mechanism. In Synechococcus sp. (strain CC9311), this protein is Serine hydroxymethyltransferase.